A 264-amino-acid polypeptide reads, in one-letter code: U1 snRNP-associated protein usp106 (264 aa).

A coiled-coil region spans residues 83–126 (DYLEDLERHVDDCNKRIDIAEARREKTKEEEERIDELMRDIIHT). A compositionally biased stretch (basic and acidic residues) spans 233–258 (EDREKSRDKKDGEKQRDNLASFEDKI). The disordered stretch occupies residues 233-264 (EDREKSRDKKDGEKQRDNLASFEDKISTSFVA).

Belongs to the Luc7 family. As to quaternary structure, component of the U1 snRNP particle, a subcomplex of the spliceosome.

It localises to the cytoplasm. The protein resides in the nucleus. Functionally, component of the U1 snRNP particle, which recognizes and binds the 5'-splice site of pre-mRNA. Together with other non-snRNP factors, U1 snRNP forms the spliceosomal commitment complex, that targets pre-mRNA to the splicing pathway. The sequence is that of U1 snRNP-associated protein usp106 (usp106) from Schizosaccharomyces pombe (strain 972 / ATCC 24843) (Fission yeast).